The following is a 254-amino-acid chain: Alcohol dehydrogenase (254 aa).

Position 10 to 33 (10 to 33) interacts with NAD(+); that stretch reads FVAGLGGIGLDTSREIVKSGPKNL. Serine 138 is a substrate binding site. The active-site Proton acceptor is the tyrosine 151.

It belongs to the short-chain dehydrogenases/reductases (SDR) family. As to quaternary structure, homodimer.

The enzyme catalyses a primary alcohol + NAD(+) = an aldehyde + NADH + H(+). It catalyses the reaction a secondary alcohol + NAD(+) = a ketone + NADH + H(+). In Drosophila mimica (Fruit fly), this protein is Alcohol dehydrogenase (Adh).